The chain runs to 294 residues: Indole-3-glycerol phosphate synthase (294 aa).

It belongs to the TrpC family.

It carries out the reaction 1-(2-carboxyphenylamino)-1-deoxy-D-ribulose 5-phosphate + H(+) = (1S,2R)-1-C-(indol-3-yl)glycerol 3-phosphate + CO2 + H2O. It participates in amino-acid biosynthesis; L-tryptophan biosynthesis; L-tryptophan from chorismate: step 4/5. The sequence is that of Indole-3-glycerol phosphate synthase from Crocosphaera subtropica (strain ATCC 51142 / BH68) (Cyanothece sp. (strain ATCC 51142)).